We begin with the raw amino-acid sequence, 152 residues long: Transcription elongation factor Spt5 (152 aa).

The KOW domain maps to 98–127 (EGDLVEVVSGPFRGMQAQVVKVTEGKGEVV).

The protein belongs to the archaeal Spt5 family. In terms of assembly, heterodimer composed of Spt4 and Spt5. Interacts with RNA polymerase (RNAP).

Its function is as follows. Stimulates transcription elongation. The protein is Transcription elongation factor Spt5 of Acidianus ambivalens (Desulfurolobus ambivalens).